Here is a 434-residue protein sequence, read N- to C-terminus: UDP-N-acetylmuramoylalanine--D-glutamate ligase (434 aa).

Residue 117-123 (GTNGKST) coordinates ATP.

This sequence belongs to the MurCDEF family.

It is found in the cytoplasm. The catalysed reaction is UDP-N-acetyl-alpha-D-muramoyl-L-alanine + D-glutamate + ATP = UDP-N-acetyl-alpha-D-muramoyl-L-alanyl-D-glutamate + ADP + phosphate + H(+). Its pathway is cell wall biogenesis; peptidoglycan biosynthesis. Cell wall formation. Catalyzes the addition of glutamate to the nucleotide precursor UDP-N-acetylmuramoyl-L-alanine (UMA). This Sphingopyxis alaskensis (strain DSM 13593 / LMG 18877 / RB2256) (Sphingomonas alaskensis) protein is UDP-N-acetylmuramoylalanine--D-glutamate ligase.